The chain runs to 246 residues: NH(3)-dependent NAD(+) synthetase (246 aa).

Residue 29 to 36 (GLSGGIDS) coordinates ATP. Asp35 is a Mg(2+) binding site. Position 110 (Arg110) interacts with deamido-NAD(+). Residue Thr130 participates in ATP binding. A Mg(2+)-binding site is contributed by Glu135. The ATP site is built by Lys159 and Ser181.

The protein belongs to the NAD synthetase family. In terms of assembly, homodimer.

The enzyme catalyses deamido-NAD(+) + NH4(+) + ATP = AMP + diphosphate + NAD(+) + H(+). The protein operates within cofactor biosynthesis; NAD(+) biosynthesis; NAD(+) from deamido-NAD(+) (ammonia route): step 1/1. Catalyzes the ATP-dependent amidation of deamido-NAD to form NAD. Uses ammonia as a nitrogen source. The sequence is that of NH(3)-dependent NAD(+) synthetase from Campylobacter jejuni subsp. doylei (strain ATCC BAA-1458 / RM4099 / 269.97).